A 262-amino-acid chain; its full sequence is Ubiquitin thioesterase otubain-like (262 aa).

The region spanning 64–262 (KFIRRTRPDG…PGHYDILYPN (199 aa)) is the OTU domain. Asp72 is an active-site residue. Cys75 functions as the Nucleophile in the catalytic mechanism. Position 168 (Ile168) interacts with substrate. His255 is a catalytic residue.

The protein belongs to the peptidase C65 family.

It carries out the reaction Thiol-dependent hydrolysis of ester, thioester, amide, peptide and isopeptide bonds formed by the C-terminal Gly of ubiquitin (a 76-residue protein attached to proteins as an intracellular targeting signal).. In terms of biological role, possible hydrolase that can remove conjugated ubiquitin from proteins in vitro and may therefore play an important regulatory role at the level of protein turnover by preventing degradation. This Drosophila melanogaster (Fruit fly) protein is Ubiquitin thioesterase otubain-like.